Reading from the N-terminus, the 138-residue chain is Small ribosomal subunit protein uS8c (138 aa).

Belongs to the universal ribosomal protein uS8 family. In terms of assembly, part of the 30S ribosomal subunit.

The protein resides in the plastid. Its subcellular location is the chloroplast. In terms of biological role, one of the primary rRNA binding proteins, it binds directly to 16S rRNA central domain where it helps coordinate assembly of the platform of the 30S subunit. This Oenothera elata subsp. hookeri (Hooker's evening primrose) protein is Small ribosomal subunit protein uS8c (rps8).